The sequence spans 476 residues: Glutamate--tRNA ligase (476 aa).

The 'HIGH' region signature appears at 9–19; that stretch reads PSPTGLFHIGT. A 'KMSKS' region motif is present at residues 248-252; that stretch reads KLSKR. Lys-251 contributes to the ATP binding site.

It belongs to the class-I aminoacyl-tRNA synthetase family. Glutamate--tRNA ligase type 1 subfamily. Monomer.

Its subcellular location is the cytoplasm. It catalyses the reaction tRNA(Glu) + L-glutamate + ATP = L-glutamyl-tRNA(Glu) + AMP + diphosphate. Its function is as follows. Catalyzes the attachment of glutamate to tRNA(Glu) in a two-step reaction: glutamate is first activated by ATP to form Glu-AMP and then transferred to the acceptor end of tRNA(Glu). This Prochlorococcus marinus (strain MIT 9301) protein is Glutamate--tRNA ligase.